The following is a 145-amino-acid chain: Bacilliredoxin BLi02578/BL01507 (145 aa).

Belongs to the bacilliredoxin family.

The polypeptide is Bacilliredoxin BLi02578/BL01507 (Bacillus licheniformis (strain ATCC 14580 / DSM 13 / JCM 2505 / CCUG 7422 / NBRC 12200 / NCIMB 9375 / NCTC 10341 / NRRL NRS-1264 / Gibson 46)).